Here is a 1131-residue protein sequence, read N- to C-terminus: PolyA-specific ribonuclease subunit panl-2 (1131 aa).

In terms of domain architecture, USP spans 489-864 (VTMQSTHGMN…LPALLAYKKK (376 aa)). Positions 909–1074 (VGLDAEFIKI…VDARYALKLY (166 aa)) constitute an Exonuclease domain. Residues 1104–1115 (QTSSPLVVSTTR) show a composition bias toward polar residues. The tract at residues 1104–1131 (QTSSPLVVSTTRKTPEDTNPADAAPKSV) is disordered.

The sequence is that of PolyA-specific ribonuclease subunit panl-2 from Caenorhabditis elegans.